The sequence spans 290 residues: 2-dehydro-3-deoxyphosphooctonate aldolase 1 (290 aa).

An N-acetylalanine modification is found at alanine 2.

The protein belongs to the KdsA family. Expressed in shoots.

It is found in the cytoplasm. The enzyme catalyses D-arabinose 5-phosphate + phosphoenolpyruvate + H2O = 3-deoxy-alpha-D-manno-2-octulosonate-8-phosphate + phosphate. Its function is as follows. Catalyzes the stereospecific condensation of D-arabinose 5-phosphate and phosphoenolpyruvate to form 3-deoxy-D-manno-octulosonate 8-phosphate (KDO-8-phosphate) and inorganic phosphate. Involved in the biosynthesis of 3-deoxy-D-manno-octulosonate (KDO) which is an indispensable component of rhamnogalacturonan II (RG-II), a structurally complex pectic polysaccharide of the primary cell wall. RG-II is essential for the cell wall integrity of rapidly growing tissues and pollen tube growth and elongation. This Arabidopsis thaliana (Mouse-ear cress) protein is 2-dehydro-3-deoxyphosphooctonate aldolase 1 (KDSA1).